We begin with the raw amino-acid sequence, 102 residues long: Putative pterin-4-alpha-carbinolamine dehydratase (102 aa).

The protein belongs to the pterin-4-alpha-carbinolamine dehydratase family.

It carries out the reaction (4aS,6R)-4a-hydroxy-L-erythro-5,6,7,8-tetrahydrobiopterin = (6R)-L-erythro-6,7-dihydrobiopterin + H2O. In Psychromonas ingrahamii (strain DSM 17664 / CCUG 51855 / 37), this protein is Putative pterin-4-alpha-carbinolamine dehydratase.